The sequence spans 213 residues: Adenylate kinase (213 aa).

14–19 (GSGKGT) provides a ligand contact to ATP. The interval 34–63 (STGDLLRAIIREGTPNGLKAKAYLDKGAFV) is NMP. Residues T35, R40, 61-63 (AFV), 89-92 (GFPR), and Q96 contribute to the AMP site. The tract at residues 129–162 (SRFLCPSCSRIYNTSQGHTECPDCHVPLIRRSDD) is LID. R130 contributes to the ATP binding site. Zn(2+)-binding residues include C133 and C136. Residue 139 to 140 (IY) coordinates ATP. Positions 149 and 152 each coordinate Zn(2+). The AMP site is built by R159 and R170. Residue N198 coordinates ATP.

This sequence belongs to the adenylate kinase family. Monomer.

The protein resides in the cytoplasm. The catalysed reaction is AMP + ATP = 2 ADP. It participates in purine metabolism; AMP biosynthesis via salvage pathway; AMP from ADP: step 1/1. In terms of biological role, catalyzes the reversible transfer of the terminal phosphate group between ATP and AMP. Plays an important role in cellular energy homeostasis and in adenine nucleotide metabolism. The sequence is that of Adenylate kinase from Chlamydia pneumoniae (Chlamydophila pneumoniae).